We begin with the raw amino-acid sequence, 343 residues long: Small ribosomal subunit biogenesis GTPase RsgA (343 aa).

The segment at 1 to 32 is disordered; that stretch reads MAKRRLSKRQVDRIRERQSQRLDTSVAAPDGK. Positions 9 to 20 are enriched in basic and acidic residues; the sequence is RQVDRIRERQSQ. The region spanning 109-273 is the CP-type G domain; the sequence is YGKLKPVAAN…CIDSPGIREF (165 aa). GTP is bound by residues 156–159 and 215–223; these read NKLD and GQSGVGKSS. Residues Cys-297, Cys-302, His-304, and Cys-310 each coordinate Zn(2+).

The protein belongs to the TRAFAC class YlqF/YawG GTPase family. RsgA subfamily. As to quaternary structure, monomer. Associates with 30S ribosomal subunit, binds 16S rRNA. The cofactor is Zn(2+).

It is found in the cytoplasm. In terms of biological role, one of several proteins that assist in the late maturation steps of the functional core of the 30S ribosomal subunit. Helps release RbfA from mature subunits. May play a role in the assembly of ribosomal proteins into the subunit. Circularly permuted GTPase that catalyzes slow GTP hydrolysis, GTPase activity is stimulated by the 30S ribosomal subunit. In Saccharophagus degradans (strain 2-40 / ATCC 43961 / DSM 17024), this protein is Small ribosomal subunit biogenesis GTPase RsgA.